The sequence spans 156 residues: Cell division protein SepF (156 aa).

Over residues 20-36 (AQYGYEKEQTDMKKQQD) the composition is skewed to basic and acidic residues. The interval 20 to 50 (AQYGYEKEQTDMKKQQDPPEQQDVTFPKAQP) is disordered.

Belongs to the SepF family. Homodimer. Interacts with FtsZ.

Its subcellular location is the cytoplasm. In terms of biological role, cell division protein that is part of the divisome complex and is recruited early to the Z-ring. Probably stimulates Z-ring formation, perhaps through the cross-linking of FtsZ protofilaments. Its function overlaps with FtsA. The protein is Cell division protein SepF of Bacillus cereus (strain G9842).